Here is a 286-residue protein sequence, read N- to C-terminus: Putative movement protein 3 (286 aa).

Belongs to the nucleorhabdovirus type-1 movement protein family.

Transports viral genome to neighboring plant cells directly through plasmosdesmata, without any budding. The movement protein allows efficient cell to cell propagation, by bypassing the host cell wall barrier. In Rottboellia (Sorghum), this protein is Putative movement protein 3 (3).